A 692-amino-acid chain; its full sequence is DNA ligase (692 aa).

Over residues 1–14 the composition is skewed to polar residues; the sequence is MQPDLFSTASQADA. Residues 1–27 form a disordered region; sequence MQPDLFSTASQADANATPEEPDASNPA. Residues 54–58, 103–104, and E134 each bind NAD(+); these read DAEYD and SL. The N6-AMP-lysine intermediate role is filled by K136. 4 residues coordinate NAD(+): R157, E194, K311, and K335. Zn(2+) is bound by residues C429, C432, C447, and C454. The 81-residue stretch at 612-692 folds into the BRCT domain; sequence NKPKPFAGKT…ALLQLLDTHE (81 aa).

Belongs to the NAD-dependent DNA ligase family. LigA subfamily. Mg(2+) serves as cofactor. It depends on Mn(2+) as a cofactor.

The catalysed reaction is NAD(+) + (deoxyribonucleotide)n-3'-hydroxyl + 5'-phospho-(deoxyribonucleotide)m = (deoxyribonucleotide)n+m + AMP + beta-nicotinamide D-nucleotide.. Its function is as follows. DNA ligase that catalyzes the formation of phosphodiester linkages between 5'-phosphoryl and 3'-hydroxyl groups in double-stranded DNA using NAD as a coenzyme and as the energy source for the reaction. It is essential for DNA replication and repair of damaged DNA. This Janthinobacterium sp. (strain Marseille) (Minibacterium massiliensis) protein is DNA ligase.